The following is a 464-amino-acid chain: Argininosuccinate lyase (464 aa).

This sequence belongs to the lyase 1 family. Argininosuccinate lyase subfamily.

It is found in the cytoplasm. The enzyme catalyses 2-(N(omega)-L-arginino)succinate = fumarate + L-arginine. The protein operates within amino-acid biosynthesis; L-arginine biosynthesis; L-arginine from L-ornithine and carbamoyl phosphate: step 3/3. The sequence is that of Argininosuccinate lyase from Pseudomonas entomophila (strain L48).